We begin with the raw amino-acid sequence, 349 residues long: Biotin synthase (349 aa).

In terms of domain architecture, Radical SAM core spans 70–295; the sequence is PEVEVEGIIS…RTMLRFAGGR (226 aa). Residues cysteine 85, cysteine 89, and cysteine 92 each coordinate [4Fe-4S] cluster. Residues cysteine 128, cysteine 161, cysteine 220, and arginine 290 each coordinate [2Fe-2S] cluster.

The protein belongs to the radical SAM superfamily. Biotin synthase family. In terms of assembly, homodimer. [4Fe-4S] cluster is required as a cofactor. [2Fe-2S] cluster serves as cofactor.

The catalysed reaction is (4R,5S)-dethiobiotin + (sulfur carrier)-SH + 2 reduced [2Fe-2S]-[ferredoxin] + 2 S-adenosyl-L-methionine = (sulfur carrier)-H + biotin + 2 5'-deoxyadenosine + 2 L-methionine + 2 oxidized [2Fe-2S]-[ferredoxin]. The protein operates within cofactor biosynthesis; biotin biosynthesis; biotin from 7,8-diaminononanoate: step 2/2. In terms of biological role, catalyzes the conversion of dethiobiotin (DTB) to biotin by the insertion of a sulfur atom into dethiobiotin via a radical-based mechanism. The sequence is that of Biotin synthase from Mycobacterium bovis (strain ATCC BAA-935 / AF2122/97).